The following is a 631-amino-acid chain: Phosphomethylpyrimidine synthase (631 aa).

The tract at residues 54–80 is disordered; it reads TLVGGDKDKPRYETNEPIPVYDTSGPY. A compositionally biased stretch (basic and acidic residues) spans 58–67; it reads GDKDKPRYET. Residues N239, M268, Y297, H333, 353–355, 394–397, and E433 each bind substrate; these read SRG and DGLR. Residue H437 participates in Zn(2+) binding. Residue Y460 participates in substrate binding. A Zn(2+)-binding site is contributed by H501. [4Fe-4S] cluster-binding residues include C581, C584, and C589.

This sequence belongs to the ThiC family. Homodimer. Requires [4Fe-4S] cluster as cofactor.

The enzyme catalyses 5-amino-1-(5-phospho-beta-D-ribosyl)imidazole + S-adenosyl-L-methionine = 4-amino-2-methyl-5-(phosphooxymethyl)pyrimidine + CO + 5'-deoxyadenosine + formate + L-methionine + 3 H(+). The protein operates within cofactor biosynthesis; thiamine diphosphate biosynthesis. Catalyzes the synthesis of the hydroxymethylpyrimidine phosphate (HMP-P) moiety of thiamine from aminoimidazole ribotide (AIR) in a radical S-adenosyl-L-methionine (SAM)-dependent reaction. The sequence is that of Phosphomethylpyrimidine synthase from Klebsiella pneumoniae subsp. pneumoniae (strain ATCC 700721 / MGH 78578).